The sequence spans 786 residues: Probable aminopeptidase 1 (786 aa).

Residues Glu103 and 235 to 239 each bind substrate; that span reads GAMEN. Position 270 (His270) interacts with Zn(2+). Glu271 acts as the Proton acceptor in catalysis. The Zn(2+) site is built by His274 and Glu293.

This sequence belongs to the peptidase M1 family. Zn(2+) is required as a cofactor.

It is found in the cytoplasm. The chain is Probable aminopeptidase 1 (ape1) from Sulfurisphaera tokodaii (strain DSM 16993 / JCM 10545 / NBRC 100140 / 7) (Sulfolobus tokodaii).